A 280-amino-acid polypeptide reads, in one-letter code: Protein phosphatase 1 regulatory subunit 3B-A (280 aa).

Residues 58 to 61 (RVSF) carry the PP1-binding motif motif. The 109-residue stretch at 121–229 (RNRLQADSVC…SNKSLNYKIA (109 aa)) folds into the CBM21 domain.

In terms of assembly, interacts with glycogen, PPP1CC catalytic subunit of PP1 and PYGL. Associates with glycogen particles. Forms complexes with debranching enzyme, glycogen phosphorylase, glycogen synthase and phosphorylase kinase which is necessary for its regulation of PP1 activity.

Acts as a glycogen-targeting subunit for phosphatase PP1. Facilitates interaction of the PP1 with enzymes of the glycogen metabolism and regulates its activity. Suppresses the rate at which PP1 dephosphorylates (inactivates) glycogen phosphorylase and enhances the rate at which it activates glycogen synthase and therefore limits glycogen breakdown. This chain is Protein phosphatase 1 regulatory subunit 3B-A (ppp1r3b-a), found in Xenopus laevis (African clawed frog).